Here is a 491-residue protein sequence, read N- to C-terminus: MPTPNAASPQAKGFRRAVSELDAKQAEAIMSPRFVGRRQSLIQDARKEREKAEAAASSSESAEAAAWLERDGEAVLTLLFALPPTRPPALTRAIKVFETFEAHLHHLETRPAQPLRAGSPPLECFVRCEVPGPVVPALLSALRRVAEDVRAAGESKVLWFPRKVSELDKCHHLVTKFDPDLDLDHPGFSDQAYRQRRKLIAEIAFQYKQGDPIPHVEYTAEETATWKEVYSTLRGLYPTHACREHLEAFELLERFCGYREDRIPQLEDVSRFLKERTGFQLRPAAGLLSARDFLASLAFRVFQCTQYIRHASSPMHSPEPECCHELLGHVPMLADRTFAQFSQDIGLASLGVSDEEIEKLSTLYWFTVEFGLCKQNGEVKAYGAGLLSSYGELLHSLSEEPEIRAFDPDAAAVQPYQDQTYQPVYFVSESFSDAKDKLRSYASRIQRPFSVKFDPYTLAIDVLDSPHAIRHALDGVQDEMQALAHALNAIS.

S19 is subject to Phosphoserine; by CaMK2. A Phosphoserine modification is found at S31. At S40 the chain carries Phosphoserine; by CaMK2 and PKA. 3 residues coordinate Fe cation: H324, H329, and E369. S465 carries the phosphoserine modification.

The protein belongs to the biopterin-dependent aromatic amino acid hydroxylase family. In terms of assembly, homotetramer. Interacts (when phosphorylated at Ser-19) with YWHAG; one YWHAG dimer bounds to one TH tetramer and this interaction may influence the phosphorylation and dephosphorylation of other sites. Interacts with NT5DC2; the interaction results in reduced phosphorylation and decreased catalytic activity of TH. It depends on Fe(2+) as a cofactor. Phosphorylated on Ser-19, Ser-31 and Ser-40 by several protein kinases with different site specificities. Phosphorylation at Ser-31 and Ser-40 leads to an increase of TH activity. Phosphorylation at Ser-40 activates the enzyme and also counteracts the feedback inhibition of TH by catecholamines. Phosphorylation of Ser-19 and Ser-31 triggers the proteasomal degradation of TH through the ubiquitin-proteasome pathway. Phosphorylation at Ser-31 facilitates transport of TH from the soma to the nerve terminals via the microtubule network. Phosphorylation at Ser-19 induces the high-affinity binding to the 14-3-3 protein YWHAG; this interaction may influence the phosphorylation and dephosphorylation of other sites. Ser-19 increases the phosphorylation at Ser-40 in a hierarchical manner, leading to increased activity.

The protein localises to the cytoplasm. It localises to the perinuclear region. It is found in the nucleus. Its subcellular location is the cell projection. The protein resides in the axon. The protein localises to the cytoplasmic vesicle. It localises to the secretory vesicle. It is found in the synaptic vesicle. It catalyses the reaction (6R)-L-erythro-5,6,7,8-tetrahydrobiopterin + L-tyrosine + O2 = (4aS,6R)-4a-hydroxy-L-erythro-5,6,7,8-tetrahydrobiopterin + L-dopa. It functions in the pathway catecholamine biosynthesis; dopamine biosynthesis; dopamine from L-tyrosine: step 1/2. With respect to regulation, inhibited in feedback fashion by the catecholamine neurotransmitters, especially by dopamine in competition with tetrahydrobiopterin. Phosphorylation of several Ser/Thr residues in the N-terminus regulates the catalytic activity. Ser-31 and Ser-40 are readily phosphorylated to activate the catalytic activity. A Cysteine modification induced by N-ethylmaleimide (NEM), inhibits tyrosine 3-monooxygenase activity through the modification of the Cys-170. Functionally, catalyzes the conversion of L-tyrosine to L-dihydroxyphenylalanine (L-Dopa), the rate-limiting step in the biosynthesis of catecholamines, dopamine, noradrenaline, and adrenaline. Uses tetrahydrobiopterin and molecular oxygen to convert tyrosine to L-Dopa. In addition to tyrosine, is able to catalyze the hydroxylation of phenylalanine and tryptophan with lower specificity. Positively regulates the regression of retinal hyaloid vessels during postnatal development. The sequence is that of Tyrosine 3-monooxygenase (TH) from Bos taurus (Bovine).